The primary structure comprises 164 residues: MTSKKRRQRGSRTHGGGTHKNRRGAGHRGGRGRAGRDKHEQHNYEPIGKHGFKRPPGAERTVAEISVQELDEGAALFVAEETAEFDDGAYHIDARDIADDADSSDITKVLGDGQVRQELHVIADAFSDTARTLIEDAGGSATLTEQGKSIAVGEDEEPNSNDEN.

Residues 1–33 (MTSKKRRQRGSRTHGGGTHKNRRGAGHRGGRGR) show a composition bias toward basic residues. Disordered regions lie at residues 1 to 59 (MTSK…PGAE) and 137 to 164 (AGGS…NDEN). Over residues 34-43 (AGRDKHEQHN) the composition is skewed to basic and acidic residues. The span at 153–164 (GEDEEPNSNDEN) shows a compositional bias: acidic residues.

This sequence belongs to the universal ribosomal protein uL15 family. Part of the 50S ribosomal subunit.

In terms of biological role, binds to the 23S rRNA. This is Large ribosomal subunit protein uL15 from Haloquadratum walsbyi (strain DSM 16790 / HBSQ001).